The primary structure comprises 136 residues: Protein NrdI (136 aa).

It belongs to the NrdI family.

Functionally, probably involved in ribonucleotide reductase function. The sequence is that of Protein NrdI from Shigella dysenteriae serotype 1 (strain Sd197).